A 392-amino-acid chain; its full sequence is 2,3-bisphosphoglycerate-independent phosphoglycerate mutase (392 aa).

The protein belongs to the BPG-independent phosphoglycerate mutase family. A-PGAM subfamily.

The enzyme catalyses (2R)-2-phosphoglycerate = (2R)-3-phosphoglycerate. Its pathway is carbohydrate degradation; glycolysis; pyruvate from D-glyceraldehyde 3-phosphate: step 3/5. Catalyzes the interconversion of 2-phosphoglycerate and 3-phosphoglycerate. This chain is 2,3-bisphosphoglycerate-independent phosphoglycerate mutase, found in Methanothrix thermoacetophila (strain DSM 6194 / JCM 14653 / NBRC 101360 / PT) (Methanosaeta thermophila).